The following is a 281-amino-acid chain: Nucleotide-binding protein TRQ2_1124 (281 aa).

9 to 16 (GLSGAGKT) is an ATP binding site. A GTP-binding site is contributed by 58-61 (DVRS).

It belongs to the RapZ-like family.

In terms of biological role, displays ATPase and GTPase activities. This is Nucleotide-binding protein TRQ2_1124 from Thermotoga sp. (strain RQ2).